We begin with the raw amino-acid sequence, 188 residues long: Large ribosomal subunit protein uL6 (188 aa).

Belongs to the universal ribosomal protein uL6 family. In terms of assembly, part of the 50S ribosomal subunit.

In terms of biological role, this protein binds to the 23S rRNA, and is important in its secondary structure. It is located near the subunit interface in the base of the L7/L12 stalk, and near the tRNA binding site of the peptidyltransferase center. This is Large ribosomal subunit protein uL6 from Myxococcus xanthus (strain DK1622).